The chain runs to 436 residues: UPF0597 protein DP0591 (436 aa).

It belongs to the UPF0597 family.

The sequence is that of UPF0597 protein DP0591 from Desulfotalea psychrophila (strain LSv54 / DSM 12343).